Here is a 436-residue protein sequence, read N- to C-terminus: 3-ketoacyl-CoA thiolase (436 aa).

The active-site Acyl-thioester intermediate is cysteine 99. Residues histidine 392 and cysteine 422 each act as proton acceptor in the active site.

It belongs to the thiolase-like superfamily. Thiolase family. In terms of assembly, heterotetramer of two alpha chains (FadJ) and two beta chains (FadI).

The protein localises to the cytoplasm. It carries out the reaction an acyl-CoA + acetyl-CoA = a 3-oxoacyl-CoA + CoA. Its pathway is lipid metabolism; fatty acid beta-oxidation. Its function is as follows. Catalyzes the final step of fatty acid oxidation in which acetyl-CoA is released and the CoA ester of a fatty acid two carbons shorter is formed. This chain is 3-ketoacyl-CoA thiolase, found in Cronobacter sakazakii (strain ATCC BAA-894) (Enterobacter sakazakii).